Here is a 72-residue protein sequence, read N- to C-terminus: Translation initiation factor IF-1 (72 aa).

The S1-like domain maps to 1-72; the sequence is MSKEEAIEVE…TRGRITYRAK (72 aa).

Belongs to the IF-1 family. Component of the 30S ribosomal translation pre-initiation complex which assembles on the 30S ribosome in the order IF-2 and IF-3, IF-1 and N-formylmethionyl-tRNA(fMet); mRNA recruitment can occur at any time during PIC assembly.

It localises to the cytoplasm. In terms of biological role, one of the essential components for the initiation of protein synthesis. Stabilizes the binding of IF-2 and IF-3 on the 30S subunit to which N-formylmethionyl-tRNA(fMet) subsequently binds. Helps modulate mRNA selection, yielding the 30S pre-initiation complex (PIC). Upon addition of the 50S ribosomal subunit IF-1, IF-2 and IF-3 are released leaving the mature 70S translation initiation complex. The sequence is that of Translation initiation factor IF-1 from Geotalea uraniireducens (strain Rf4) (Geobacter uraniireducens).